Reading from the N-terminus, the 250-residue chain is NADH-quinone oxidoreductase subunit C (250 aa).

It belongs to the complex I 30 kDa subunit family. In terms of assembly, NDH-1 is composed of 14 different subunits. Subunits NuoB, C, D, E, F, and G constitute the peripheral sector of the complex.

The protein localises to the cell inner membrane. The catalysed reaction is a quinone + NADH + 5 H(+)(in) = a quinol + NAD(+) + 4 H(+)(out). In terms of biological role, NDH-1 shuttles electrons from NADH, via FMN and iron-sulfur (Fe-S) centers, to quinones in the respiratory chain. The immediate electron acceptor for the enzyme in this species is believed to be ubiquinone. Couples the redox reaction to proton translocation (for every two electrons transferred, four hydrogen ions are translocated across the cytoplasmic membrane), and thus conserves the redox energy in a proton gradient. This Xanthomonas oryzae pv. oryzae (strain PXO99A) protein is NADH-quinone oxidoreductase subunit C.